Consider the following 217-residue polypeptide: Large ribosomal subunit protein uL4 (217 aa).

Positions threonine 58–serine 90 are disordered.

Belongs to the universal ribosomal protein uL4 family. As to quaternary structure, part of the 50S ribosomal subunit.

One of the primary rRNA binding proteins, this protein initially binds near the 5'-end of the 23S rRNA. It is important during the early stages of 50S assembly. It makes multiple contacts with different domains of the 23S rRNA in the assembled 50S subunit and ribosome. Its function is as follows. Forms part of the polypeptide exit tunnel. The sequence is that of Large ribosomal subunit protein uL4 from Syntrophus aciditrophicus (strain SB).